The following is a 159-amino-acid chain: Ribosomal RNA large subunit methyltransferase H (159 aa).

S-adenosyl-L-methionine-binding positions include L76, G108, and 127 to 132; that span reads LSRLTF.

It belongs to the RNA methyltransferase RlmH family. Homodimer.

Its subcellular location is the cytoplasm. It catalyses the reaction pseudouridine(1915) in 23S rRNA + S-adenosyl-L-methionine = N(3)-methylpseudouridine(1915) in 23S rRNA + S-adenosyl-L-homocysteine + H(+). Specifically methylates the pseudouridine at position 1915 (m3Psi1915) in 23S rRNA. This chain is Ribosomal RNA large subunit methyltransferase H, found in Syntrophomonas wolfei subsp. wolfei (strain DSM 2245B / Goettingen).